The sequence spans 217 residues: Octanoyltransferase (217 aa).

A BPL/LPL catalytic domain is found at 31 to 206 (KSVMDEAWLL…ELVSRLGYAE (176 aa)). Substrate contacts are provided by residues 70 to 77 (RGGQVTYH), 137 to 139 (SLG), and 150 to 152 (GLA). C168 acts as the Acyl-thioester intermediate in catalysis.

It belongs to the LipB family.

Its subcellular location is the cytoplasm. It carries out the reaction octanoyl-[ACP] + L-lysyl-[protein] = N(6)-octanoyl-L-lysyl-[protein] + holo-[ACP] + H(+). The protein operates within protein modification; protein lipoylation via endogenous pathway; protein N(6)-(lipoyl)lysine from octanoyl-[acyl-carrier-protein]: step 1/2. Functionally, catalyzes the transfer of endogenously produced octanoic acid from octanoyl-acyl-carrier-protein onto the lipoyl domains of lipoate-dependent enzymes. Lipoyl-ACP can also act as a substrate although octanoyl-ACP is likely to be the physiological substrate. This chain is Octanoyltransferase, found in Pseudomonas aeruginosa (strain UCBPP-PA14).